The primary structure comprises 336 residues: Galactose/methyl galactoside import permease protein MglC (336 aa).

8 helical membrane-spanning segments follow: residues 17–37, 53–73, 107–127, 128–148, 181–201, 231–251, 257–277, and 306–326; these read AIYF…PTFL, LIIA…LSAG, VVIL…GLVI, AYLN…IYGF, FKLS…WIMW, LVAI…LEAG, TNNL…VGGV, and IGVN…LAVA.

This sequence belongs to the binding-protein-dependent transport system permease family. AraH/RbsC subfamily. The complex is composed of one ATP-binding protein (MglA), two transmembrane proteins (MglC) and a solute-binding protein (MglB).

It localises to the cell inner membrane. In terms of biological role, part of the ABC transporter complex MglABC involved in galactose/methyl galactoside import. Probably responsible for the translocation of the substrate across the membrane. This Haemophilus influenzae (strain ATCC 51907 / DSM 11121 / KW20 / Rd) protein is Galactose/methyl galactoside import permease protein MglC (mglC).